Reading from the N-terminus, the 403-residue chain is Keratin, type I cytoskeletal 19 (403 aa).

The interval 1–82 (MTSYSYRQSS…TVTDGLLGGN (82 aa)) is head. Arg7 bears the Omega-N-methylarginine mark. A Phosphoserine modification is found at Ser14. Arg24 bears the Asymmetric dimethylarginine; alternate mark. Arg24 is modified (omega-N-methylarginine; alternate). Position 27 is a phosphoserine (Ser27). Arg32 is subject to Omega-N-methylarginine. Phosphoserine is present on residues Ser35 and Ser40. Omega-N-methylarginine occurs at positions 43 and 51. Ser57 and Ser67 each carry phosphoserine. The coil 1A stretch occupies residues 83 to 118 (EKITMQNLNDRLASYLDKVRALEQANGELEVKIRDW). An IF rod domain is found at 83-394 (EKITMQNLND…SLLEGQEAHY (312 aa)). The segment at 119 to 136 (YQKQGPGPFRDYSQYFKT) is linker 1. The segment at 137-228 (IEDLRDKILG…KNHEEEISAL (92 aa)) is coil 1B. The tract at residues 229 to 251 (RSQVGGQVSVEVDSTPGIDLAKI) is linker 12. The tract at residues 247–393 (DLAKILSEMR…RSLLEGQEAH (147 aa)) is necessary for interaction with PNN. Residues 252–390 (LSEMRSQYEA…ATYRSLLEGQ (139 aa)) form a coil 2 region. Position 326 is a phosphothreonine (Thr326). Positions 391–403 (EAHYNSLSIAKAL) are rod-like helical tail. Tyr394 is modified (phosphotyrosine). Ser398 is subject to Phosphoserine.

Belongs to the intermediate filament family. Heterotetramer of two type I and two type II keratins. Interacts with PNN. Interacts with the actin-binding domain of DMD. As to expression, expressed in brain, heart, skin and in costameres of myoplasm at the sarcolemmal membrane in skeletal and cardiac muscle fibers. Undifferentiated gonads and somatic cells of ovarian cords throughout the fetal ovary development.

Functionally, involved in the organization of myofibers. Together with KRT8, helps to link the contractile apparatus to dystrophin at the costameres of striated muscle. The polypeptide is Keratin, type I cytoskeletal 19 (Krt19) (Rattus norvegicus (Rat)).